The sequence spans 230 residues: Lipoprotein-releasing system ATP-binding protein LolD (230 aa).

Residues 6–230 (LQVQAVSKSY…GYLQVPESAQ (225 aa)) enclose the ABC transporter domain. 42–49 (GTSGSGKS) serves as a coordination point for ATP.

The protein belongs to the ABC transporter superfamily. Lipoprotein translocase (TC 3.A.1.125) family. In terms of assembly, the complex is composed of two ATP-binding proteins (LolD) and two transmembrane proteins (LolC and LolE).

It localises to the cell inner membrane. Its function is as follows. Part of the ABC transporter complex LolCDE involved in the translocation of mature outer membrane-directed lipoproteins, from the inner membrane to the periplasmic chaperone, LolA. Responsible for the formation of the LolA-lipoprotein complex in an ATP-dependent manner. The protein is Lipoprotein-releasing system ATP-binding protein LolD of Shewanella oneidensis (strain ATCC 700550 / JCM 31522 / CIP 106686 / LMG 19005 / NCIMB 14063 / MR-1).